The sequence spans 376 residues: Actin-like protein 53D (376 aa).

Residues 1-40 (MSSEVDSNSHHAAVVIDNGSGVCKAGFSPEDTPRAVFPSI) form a necessary and sufficient for recruitment to the fusome and actin cones of spermatocyte cysts region.

The protein belongs to the actin family. ARP1 subfamily. As to expression, high expression in males whereas expression in females is very low. In adult males, highest levels of expression are in the testis. In adult females, expressed only in the ovaries at very low levels. In larvae, highly expressed in the imaginal disk whereas in prepupae and pupae modest levels of expression occur in the fat body.

It is found in the cytoplasm. The protein localises to the cytoskeleton. Functionally, required for optimal embryo development, particularly under heat stress conditions. Also appears to have a role in negatively regulating spermatocyte cyst development. Under heat stress conditions, required for the correct organization and migration of nuclei during early embryogenesis, and therefore possibly functions by regulating embryonic actin networks during the heat stress response. The protein is Actin-like protein 53D of Drosophila melanogaster (Fruit fly).